A 282-amino-acid polypeptide reads, in one-letter code: ATP synthase gamma chain (282 aa).

The protein belongs to the ATPase gamma chain family. F-type ATPases have 2 components, CF(1) - the catalytic core - and CF(0) - the membrane proton channel. CF(1) has five subunits: alpha(3), beta(3), gamma(1), delta(1), epsilon(1). CF(0) has three main subunits: a, b and c.

The protein localises to the cell membrane. Produces ATP from ADP in the presence of a proton gradient across the membrane. The gamma chain is believed to be important in regulating ATPase activity and the flow of protons through the CF(0) complex. This chain is ATP synthase gamma chain, found in Clostridium botulinum (strain 657 / Type Ba4).